Reading from the N-terminus, the 304-residue chain is Killer cell immunoglobulin-like receptor 2DS2 (304 aa).

The N-terminal stretch at Met1–Pro21 is a signal peptide. The Extracellular portion of the chain corresponds to His22 to His245. 2 Ig-like C2-type domains span residues Glu42–Ser107 and Gly142–Ser205. 2 disulfide bridges follow: Cys49–Cys100 and Cys149–Cys198. N-linked (GlcNAc...) asparagine glycosylation is found at Asn84, Asn178, and Asn211. Residues Val220–Gly239 form a disordered region. A helical transmembrane segment spans residues Val246 to Leu265. Residues His266 to Ala304 are Cytoplasmic-facing. The disordered stretch occupies residues Gln280–Ala304.

Belongs to the immunoglobulin superfamily.

Its subcellular location is the cell membrane. Functionally, receptor on natural killer (NK) cells for HLA-C alleles. Does not inhibit the activity of NK cells. This is Killer cell immunoglobulin-like receptor 2DS2 from Homo sapiens (Human).